Here is a 167-residue protein sequence, read N- to C-terminus: SsrA-binding protein (167 aa).

Belongs to the SmpB family.

The protein localises to the cytoplasm. Its function is as follows. Required for rescue of stalled ribosomes mediated by trans-translation. Binds to transfer-messenger RNA (tmRNA), required for stable association of tmRNA with ribosomes. tmRNA and SmpB together mimic tRNA shape, replacing the anticodon stem-loop with SmpB. tmRNA is encoded by the ssrA gene; the 2 termini fold to resemble tRNA(Ala) and it encodes a 'tag peptide', a short internal open reading frame. During trans-translation Ala-aminoacylated tmRNA acts like a tRNA, entering the A-site of stalled ribosomes, displacing the stalled mRNA. The ribosome then switches to translate the ORF on the tmRNA; the nascent peptide is terminated with the 'tag peptide' encoded by the tmRNA and targeted for degradation. The ribosome is freed to recommence translation, which seems to be the essential function of trans-translation. The sequence is that of SsrA-binding protein from Stenotrophomonas maltophilia (strain R551-3).